We begin with the raw amino-acid sequence, 350 residues long: Dihydroorotate dehydrogenase (quinone) (350 aa).

FMN is bound by residues 67 to 71 (AGFDK) and Gly91. Position 71 (Lys71) interacts with substrate. A substrate-binding site is contributed by 116 to 120 (NRMGF). Positions 144 and 177 each coordinate FMN. Asn177 contributes to the substrate binding site. Ser180 acts as the Nucleophile in catalysis. Asn182 is a substrate binding site. 2 residues coordinate FMN: Lys213 and Thr241. 242–243 (NT) provides a ligand contact to substrate. The segment at 249–268 (ASLHSDAADEEGGLSGAPIT) is disordered. Residues Gly264, Gly291, and 312-313 (YT) each bind FMN.

Belongs to the dihydroorotate dehydrogenase family. Type 2 subfamily. As to quaternary structure, monomer. FMN is required as a cofactor.

It is found in the cell membrane. It carries out the reaction (S)-dihydroorotate + a quinone = orotate + a quinol. The protein operates within pyrimidine metabolism; UMP biosynthesis via de novo pathway; orotate from (S)-dihydroorotate (quinone route): step 1/1. Its function is as follows. Catalyzes the conversion of dihydroorotate to orotate with quinone as electron acceptor. The protein is Dihydroorotate dehydrogenase (quinone) of Natronomonas pharaonis (strain ATCC 35678 / DSM 2160 / CIP 103997 / JCM 8858 / NBRC 14720 / NCIMB 2260 / Gabara) (Halobacterium pharaonis).